The sequence spans 232 residues: Small ribosomal subunit protein uS3 (232 aa).

The KH type-2 domain maps to 39 to 107; sequence VRQFLIKELA…PAQINIAEVR (69 aa).

It belongs to the universal ribosomal protein uS3 family. As to quaternary structure, part of the 30S ribosomal subunit. Forms a tight complex with proteins S10 and S14.

Functionally, binds the lower part of the 30S subunit head. Binds mRNA in the 70S ribosome, positioning it for translation. In Serratia proteamaculans (strain 568), this protein is Small ribosomal subunit protein uS3.